The sequence spans 186 residues: Threonylcarbamoyl-AMP synthase (186 aa).

One can recognise a YrdC-like domain in the interval 6–186 (GFRLRLAANA…FDAMSGRRIR (181 aa)).

Belongs to the SUA5 family. TsaC subfamily.

The protein localises to the cytoplasm. It carries out the reaction L-threonine + hydrogencarbonate + ATP = L-threonylcarbamoyladenylate + diphosphate + H2O. Its function is as follows. Required for the formation of a threonylcarbamoyl group on adenosine at position 37 (t(6)A37) in tRNAs that read codons beginning with adenine. Catalyzes the conversion of L-threonine, HCO(3)(-)/CO(2) and ATP to give threonylcarbamoyl-AMP (TC-AMP) as the acyladenylate intermediate, with the release of diphosphate. The protein is Threonylcarbamoyl-AMP synthase of Methylococcus capsulatus (strain ATCC 33009 / NCIMB 11132 / Bath).